A 147-amino-acid chain; its full sequence is MRAVVQRVSCASLTVEGHSGAQIGPGLTVLLAIAPGDGSRDIDWMVRKLLGLRIFEDDSGKMNASVVDIRGALLIVSQFTLYGDTSRGNRPGFSASAPYETAHEIYNQFVDRLRSSSPLVVQTGVFGRDMQVSLTNDGPVTMILDTP.

The Gly-cisPro motif, important for rejection of L-amino acids motif lies at 138 to 139 (GP).

It belongs to the DTD family. In terms of assembly, homodimer.

The protein resides in the cytoplasm. It carries out the reaction glycyl-tRNA(Ala) + H2O = tRNA(Ala) + glycine + H(+). The catalysed reaction is a D-aminoacyl-tRNA + H2O = a tRNA + a D-alpha-amino acid + H(+). An aminoacyl-tRNA editing enzyme that deacylates mischarged D-aminoacyl-tRNAs. Also deacylates mischarged glycyl-tRNA(Ala), protecting cells against glycine mischarging by AlaRS. Acts via tRNA-based rather than protein-based catalysis; rejects L-amino acids rather than detecting D-amino acids in the active site. By recycling D-aminoacyl-tRNA to D-amino acids and free tRNA molecules, this enzyme counteracts the toxicity associated with the formation of D-aminoacyl-tRNA entities in vivo and helps enforce protein L-homochirality. This is D-aminoacyl-tRNA deacylase from Prosthecochloris aestuarii (strain DSM 271 / SK 413).